A 424-amino-acid chain; its full sequence is Glutamate-1-semialdehyde 2,1-aminomutase (424 aa).

N6-(pyridoxal phosphate)lysine is present on Lys-260.

The protein belongs to the class-III pyridoxal-phosphate-dependent aminotransferase family. HemL subfamily. Requires pyridoxal 5'-phosphate as cofactor.

The protein localises to the cytoplasm. It catalyses the reaction (S)-4-amino-5-oxopentanoate = 5-aminolevulinate. The protein operates within porphyrin-containing compound metabolism; protoporphyrin-IX biosynthesis; 5-aminolevulinate from L-glutamyl-tRNA(Glu): step 2/2. The polypeptide is Glutamate-1-semialdehyde 2,1-aminomutase (Nitrosopumilus maritimus (strain SCM1)).